Consider the following 429-residue polypeptide: Glutamate-1-semialdehyde 2,1-aminomutase (429 aa).

Lys-272 carries the N6-(pyridoxal phosphate)lysine modification.

It belongs to the class-III pyridoxal-phosphate-dependent aminotransferase family. HemL subfamily. Requires pyridoxal 5'-phosphate as cofactor.

It is found in the cytoplasm. The catalysed reaction is (S)-4-amino-5-oxopentanoate = 5-aminolevulinate. The protein operates within porphyrin-containing compound metabolism; protoporphyrin-IX biosynthesis; 5-aminolevulinate from L-glutamyl-tRNA(Glu): step 2/2. The sequence is that of Glutamate-1-semialdehyde 2,1-aminomutase from Methanothrix thermoacetophila (strain DSM 6194 / JCM 14653 / NBRC 101360 / PT) (Methanosaeta thermophila).